We begin with the raw amino-acid sequence, 396 residues long: L-lactate dehydrogenase (396 aa).

Positions 1–380 (MIISAASDYR…SGDSLVQELG (380 aa)) constitute an FMN hydroxy acid dehydrogenase domain. Residue tyrosine 24 coordinates substrate. The FMN site is built by serine 106 and glutamine 127. Tyrosine 129 is a binding site for substrate. Threonine 155 contacts FMN. Substrate is bound at residue arginine 164. Lysine 251 is an FMN binding site. Histidine 275 functions as the Proton acceptor in the catalytic mechanism. A substrate-binding site is contributed by arginine 278. Residue 306–330 (DSGIRNGLDVVRMIALGADTVLLGR) participates in FMN binding.

This sequence belongs to the FMN-dependent alpha-hydroxy acid dehydrogenase family. FMN is required as a cofactor.

It is found in the cell inner membrane. The catalysed reaction is (S)-lactate + A = pyruvate + AH2. Functionally, catalyzes the conversion of L-lactate to pyruvate. Is coupled to the respiratory chain. This Salmonella typhimurium (strain LT2 / SGSC1412 / ATCC 700720) protein is L-lactate dehydrogenase.